The chain runs to 133 residues: MNDTVTIRTRKFMTNRLLQRKQMVIDVLHPGKATVPKTEIREKLAKMYKTTPDVIFVFGFRTHFGGGKTTGFGMIYDSLDYAKKNEPKHRLARHGLYEKKKTSRKQRKERKNRMKKVRGTAKANVGAGKKPKE.

Residue Met-1 is modified to N-acetylmethionine. At Thr-9 the chain carries Phosphothreonine. A Glycyl lysine isopeptide (Lys-Gly) (interchain with G-Cter in SUMO2) cross-link involves residue Lys-37. The segment at 92–133 (ARHGLYEKKKTSRKQRKERKNRMKKVRGTAKANVGAGKKPKE) is disordered. Residues 101-119 (KTSRKQRKERKNRMKKVRG) show a composition bias toward basic residues.

The protein belongs to the eukaryotic ribosomal protein eS24 family. As to quaternary structure, component of the small ribosomal subunit. Part of the small subunit (SSU) processome, composed of more than 70 proteins and the RNA chaperone small nucleolar RNA (snoRNA) U3.

It is found in the cytoplasm. The protein localises to the nucleus. It localises to the nucleolus. Component of the small ribosomal subunit. The ribosome is a large ribonucleoprotein complex responsible for the synthesis of proteins in the cell. Required for processing of pre-rRNA and maturation of 40S ribosomal subunits. Part of the small subunit (SSU) processome, first precursor of the small eukaryotic ribosomal subunit. During the assembly of the SSU processome in the nucleolus, many ribosome biogenesis factors, an RNA chaperone and ribosomal proteins associate with the nascent pre-rRNA and work in concert to generate RNA folding, modifications, rearrangements and cleavage as well as targeted degradation of pre-ribosomal RNA by the RNA exosome. The protein is Small ribosomal subunit protein eS24 (RPS24) of Oryctolagus cuniculus (Rabbit).